The sequence spans 412 residues: Mannose-1-phosphate guanylyltransferase regulatory subunit alpha (412 aa).

The interval 6–259 (TKAIILVGGP…VGFWRQIKNA (254 aa)) is substrate-binding domain. The GDP-alpha-D-mannose site is built by Glu88 and Gln255. Residues 281–412 (LKKGNNIIGN…DRNYNNEIIL (132 aa)) form a hexapeptide repeat domain region.

The protein belongs to the transferase hexapeptide repeat family. Component of the GMPPA-GMPPB mannose-1-phosphate guanylyltransferase complex composed of 4 gmppA subunits and 8 gmppB subunits; the complex is organized into three layers, a central layer made up of 2 gmppA dimers sandwiched between two layers each made up of 2 gmppB dimers.

Regulatory subunit of the GMPPA-GMPPB mannose-1-phosphate guanylyltransferase complex; reduces the catalytic activity of GMPPB when part of the complex. Mediates allosteric feedback inhibition of GMPPB catalytic activity upon binding GDP-alpha-D-mannose. Together with GMPPB regulates GDP-alpha-D-mannose levels. The chain is Mannose-1-phosphate guanylyltransferase regulatory subunit alpha (gmppA) from Dictyostelium discoideum (Social amoeba).